A 107-amino-acid polypeptide reads, in one-letter code: Iron-sulfur cluster assembly protein CyaY (107 aa).

It belongs to the frataxin family.

Its function is as follows. Involved in iron-sulfur (Fe-S) cluster assembly. May act as a regulator of Fe-S biogenesis. The sequence is that of Iron-sulfur cluster assembly protein CyaY from Neisseria meningitidis serogroup C / serotype 2a (strain ATCC 700532 / DSM 15464 / FAM18).